The following is a 247-amino-acid chain: Aspartate/glutamate leucyltransferase (247 aa).

Belongs to the R-transferase family. Bpt subfamily.

It is found in the cytoplasm. It carries out the reaction N-terminal L-glutamyl-[protein] + L-leucyl-tRNA(Leu) = N-terminal L-leucyl-L-glutamyl-[protein] + tRNA(Leu) + H(+). It catalyses the reaction N-terminal L-aspartyl-[protein] + L-leucyl-tRNA(Leu) = N-terminal L-leucyl-L-aspartyl-[protein] + tRNA(Leu) + H(+). Functionally, functions in the N-end rule pathway of protein degradation where it conjugates Leu from its aminoacyl-tRNA to the N-termini of proteins containing an N-terminal aspartate or glutamate. The sequence is that of Aspartate/glutamate leucyltransferase from Dechloromonas aromatica (strain RCB).